Here is an 884-residue protein sequence, read N- to C-terminus: Alanine--tRNA ligase (884 aa).

Zn(2+) contacts are provided by His562, His566, Cys674, and His678.

It belongs to the class-II aminoacyl-tRNA synthetase family. The cofactor is Zn(2+).

It localises to the cytoplasm. It carries out the reaction tRNA(Ala) + L-alanine + ATP = L-alanyl-tRNA(Ala) + AMP + diphosphate. Functionally, catalyzes the attachment of alanine to tRNA(Ala) in a two-step reaction: alanine is first activated by ATP to form Ala-AMP and then transferred to the acceptor end of tRNA(Ala). Also edits incorrectly charged Ser-tRNA(Ala) and Gly-tRNA(Ala) via its editing domain. The polypeptide is Alanine--tRNA ligase (Rhizobium johnstonii (strain DSM 114642 / LMG 32736 / 3841) (Rhizobium leguminosarum bv. viciae)).